A 113-amino-acid polypeptide reads, in one-letter code: Mitochondrial import inner membrane translocase subunit PAM16 like 1 (113 aa).

Residues 1-48 constitute a mitochondrion transit peptide; sequence MAARVLASVIVMGSGIIARACTQAYRQALANASKTGVAHEATQTIKRG. The tract at residues 55–104 is J-like; it reads EARQILGVTEKSSWDEILKKYDTLFERNAQNGSFYLQSKVHRAKECLETA.

The protein belongs to the TIM16/PAM16 family. As to expression, expressed at low levels in seedlings, rosettes and inflorescence.

Its subcellular location is the mitochondrion inner membrane. Its function is as follows. Regulates ATP-dependent protein translocation into the mitochondrial matrix. The sequence is that of Mitochondrial import inner membrane translocase subunit PAM16 like 1 from Arabidopsis thaliana (Mouse-ear cress).